A 478-amino-acid chain; its full sequence is MLSDELESKPELLVQFVQNTSIPLGQGLVESEAKDITCLSLLPVTEASECSRLMLPDETPNHANSSKEVPSSAVLRSLQVNVGPDGEETRAQTVQKSPEFLTTPESPSLLQDLQPSDSTSFILLNLTRAGLGSSAEHFVFVQDETEDSGADFLSAESTDSSIPWFLRVQELAHDSLIAATRAQLAKNAKTGSNGENVHLGSGDGQPKDSGPLPQAEKKLKCTVEGCDRTFVWPAHFKYHLKTHRNERSFICPAEGCGKSFYVLQRLKVHMRTHNGEKPFMCHESGCGKQFTTAGNLKNHRRIHTGEKPFLCEAQGCGRSFAEYSSLRKHLVVHSGEKPHQCQVCGKTFSQSGSRNVHMRKHHLQLGTTGSQEQDQTAEPLMGSSLLEDASVPNKNLVSMNSQSSLGGESLNLSNTNSILGVDDEVLTERASRPLSSVPDVTHHLVTMQSGRQSYEVSVLTAVNPQELLNQGDLTERQT.

2 disordered regions span residues 84–113 and 187–214; these read PDGE…LQDL and NAKT…PLPQ. Polar residues predominate over residues 103 to 113; sequence TPESPSLLQDL. 5 consecutive C2H2-type zinc fingers follow at residues 219 to 243, 249 to 273, 279 to 303, 309 to 333, and 339 to 362; these read LKCT…LKTH, FICP…MRTH, FMCH…RRIH, FLCE…LVVH, and HQCQ…RKHH. Zn(2+) is bound by residues Cys221, Cys226, His239, His243, Cys251, Cys256, His269, His273, Cys281, Cys286, His299, His303, Cys311, Cys316, His329, His333, Cys341, Cys344, His357, and His361.

Interacts with CDKN2A/p14ARF. Post-translationally, O-glycosylated. O-GlcNAcylation may occur in response to increasing glucose levels and affect transcription factor activity. In terms of processing, sumoylated. Sumoylation increases its half-life, possibly by blocking ubiquitin-mediated degradation.

Its subcellular location is the nucleus. It is found in the chromosome. In terms of biological role, transcription factor that binds to the sequence motif 5'-CATCCCATAATA-3', and is specifically required to silence expression of fetal hemoglobin in adult erythroid cells. Prevents expression of fetal hemoglobin genes HBG1 and HBG2 through CHD4: acts as a direct transcriptional activator of CHD4, a central component of the NuRD complex that represses transcription of fetal hemoglobin genes HBG1 and HBG2 in erythroid cells. May also activate transcription of matrix-remodeling genes such as MMP1 during fibroblast senescence. May activate transcription of the gap junction gene GJC1, perhaps in response to increasing glucose. However, recent studies suggest that ZNF410 is dedicated to regulate expression of a single gene: CHD4. This chain is Zinc finger protein 410, found in Mus musculus (Mouse).